The following is a 648-amino-acid chain: 60 kDa heat shock protein homolog 1, mitochondrial (648 aa).

A mitochondrion-targeting transit peptide spans 1–55 (MFRSCVPKAITSSRCFARMYSKDVRFGSGVRAMMIRGVDILADAVAVTMGPKGRS).

It belongs to the chaperonin (HSP60) family.

It is found in the mitochondrion matrix. Functionally, prevents misfolding and promotes the refolding and proper assembly of unfolded polypeptides generated under stress conditions. The chain is 60 kDa heat shock protein homolog 1, mitochondrial (Hsp60B) from Drosophila melanogaster (Fruit fly).